A 196-amino-acid chain; its full sequence is dTTP/UTP pyrophosphatase (196 aa).

Asp72 functions as the Proton acceptor in the catalytic mechanism.

The protein belongs to the Maf family. YhdE subfamily. Requires a divalent metal cation as cofactor.

The protein resides in the cytoplasm. It carries out the reaction dTTP + H2O = dTMP + diphosphate + H(+). It catalyses the reaction UTP + H2O = UMP + diphosphate + H(+). Nucleoside triphosphate pyrophosphatase that hydrolyzes dTTP and UTP. May have a dual role in cell division arrest and in preventing the incorporation of modified nucleotides into cellular nucleic acids. This chain is dTTP/UTP pyrophosphatase, found in Chlamydia trachomatis serovar A (strain ATCC VR-571B / DSM 19440 / HAR-13).